Here is a 1474-residue protein sequence, read N- to C-terminus: Alpha-2-macroglobulin (1474 aa).

The N-terminal stretch at 1–23 is a signal peptide; sequence MGKNKLLHPSLVLLLLVLLPTDA. The cysteines at positions 48 and 86 are disulfide-linked. Asn-55 carries an N-linked (GlcNAc...) (complex) asparagine glycan. Asn-70 and Asn-247 each carry an N-linked (GlcNAc...) asparagine glycan. 2 disulfide bridges follow: Cys-251/Cys-299 and Cys-269/Cys-287. N-linked (GlcNAc...) asparagine glycosylation is found at Asn-396 and Asn-410. 8 disulfide bridges follow: Cys-470–Cys-563, Cys-595–Cys-771, Cys-642–Cys-689, Cys-821–Cys-849, Cys-847–Cys-883, Cys-921–Cys-1321, Cys-1079–Cys-1127, and Cys-1352–Cys-1467. A bait region region spans residues 690-728; it reads PQLQQYEMHGPEGLRVGFYESDVMGRGHARLVHVEEPHT. Isoglutamyl lysine isopeptide (Gln-Lys) (interchain with K-? in other proteins) cross-links involve residues Gln-693 and Gln-694. Inhibitory regions lie at residues 704–709, 719–723, and 730–735; these read RVGFYE, RLVHV, and TVRKYF. The N-linked (GlcNAc...) asparagine glycan is linked to Asn-869. The segment at residues 972 to 975 is a cross-link (isoglutamyl cysteine thioester (Cys-Gln)); that stretch reads CGEQ. N-linked (GlcNAc...) asparagine glycosylation occurs at Asn-991. Asn-1424 is a glycosylation site (N-linked (GlcNAc...) (complex) asparagine).

This sequence belongs to the protease inhibitor I39 (alpha-2-macroglobulin) family. Homotetramer; disulfide-linked. In terms of tissue distribution, secreted in plasma.

The protein resides in the secreted. Functionally, is able to inhibit all four classes of proteinases by a unique 'trapping' mechanism. This protein has a peptide stretch, called the 'bait region' which contains specific cleavage sites for different proteinases. When a proteinase cleaves the bait region, a conformational change is induced in the protein which traps the proteinase. The entrapped enzyme remains active against low molecular weight substrates (activity against high molecular weight substrates is greatly reduced). Following cleavage in the bait region, a thioester bond is hydrolyzed and mediates the covalent binding of the protein to the proteinase. This is Alpha-2-macroglobulin (A2M) from Homo sapiens (Human).